Consider the following 476-residue polypeptide: Glutamyl-tRNA(Gln) amidotransferase subunit A (476 aa).

Residues lysine 76 and serine 151 each act as charge relay system in the active site. Residue serine 175 is the Acyl-ester intermediate of the active site.

Belongs to the amidase family. GatA subfamily. As to quaternary structure, heterotrimer of A, B and C subunits.

The catalysed reaction is L-glutamyl-tRNA(Gln) + L-glutamine + ATP + H2O = L-glutaminyl-tRNA(Gln) + L-glutamate + ADP + phosphate + H(+). Allows the formation of correctly charged Gln-tRNA(Gln) through the transamidation of misacylated Glu-tRNA(Gln) in organisms which lack glutaminyl-tRNA synthetase. The reaction takes place in the presence of glutamine and ATP through an activated gamma-phospho-Glu-tRNA(Gln). In Chlorobium phaeobacteroides (strain DSM 266 / SMG 266 / 2430), this protein is Glutamyl-tRNA(Gln) amidotransferase subunit A.